Here is a 291-residue protein sequence, read N- to C-terminus: Small ribosomal subunit biogenesis GTPase RsgA (291 aa).

The region spanning 63–221 (QNELKRPPVS…VADTPGFSAL (159 aa)) is the CP-type G domain. Residues 112–115 (TKKD) and 164–172 (GQSGVGKST) contribute to the GTP site. The Zn(2+) site is built by Cys-245, Cys-250, His-252, and Cys-258.

Belongs to the TRAFAC class YlqF/YawG GTPase family. RsgA subfamily. In terms of assembly, monomer. Associates with 30S ribosomal subunit, binds 16S rRNA. Zn(2+) is required as a cofactor.

The protein resides in the cytoplasm. Functionally, one of several proteins that assist in the late maturation steps of the functional core of the 30S ribosomal subunit. Helps release RbfA from mature subunits. May play a role in the assembly of ribosomal proteins into the subunit. Circularly permuted GTPase that catalyzes slow GTP hydrolysis, GTPase activity is stimulated by the 30S ribosomal subunit. The sequence is that of Small ribosomal subunit biogenesis GTPase RsgA from Staphylococcus carnosus (strain TM300).